A 353-amino-acid chain; its full sequence is Phospho-N-acetylmuramoyl-pentapeptide-transferase (353 aa).

Transmembrane regions (helical) follow at residues 13-33 (ILGY…FFTL), 66-86 (TPTM…LISI), 88-108 (FSNL…IIGF), 130-150 (LILQ…LSDF), 162-182 (PLFD…IATS), 193-213 (GLAT…IYIT), 229-249 (IGEV…FLWY), 256-276 (VFMG…LAII), 281-301 (ILLL…ILQV), and 330-350 (KIIV…LITL).

The protein belongs to the glycosyltransferase 4 family. MraY subfamily. The cofactor is Mg(2+).

It is found in the cell inner membrane. The enzyme catalyses UDP-N-acetyl-alpha-D-muramoyl-L-alanyl-gamma-D-glutamyl-meso-2,6-diaminopimeloyl-D-alanyl-D-alanine + di-trans,octa-cis-undecaprenyl phosphate = di-trans,octa-cis-undecaprenyl diphospho-N-acetyl-alpha-D-muramoyl-L-alanyl-D-glutamyl-meso-2,6-diaminopimeloyl-D-alanyl-D-alanine + UMP. The protein operates within cell wall biogenesis; peptidoglycan biosynthesis. Its function is as follows. Catalyzes the initial step of the lipid cycle reactions in the biosynthesis of the cell wall peptidoglycan: transfers peptidoglycan precursor phospho-MurNAc-pentapeptide from UDP-MurNAc-pentapeptide onto the lipid carrier undecaprenyl phosphate, yielding undecaprenyl-pyrophosphoryl-MurNAc-pentapeptide, known as lipid I. The protein is Phospho-N-acetylmuramoyl-pentapeptide-transferase of Sulfurimonas denitrificans (strain ATCC 33889 / DSM 1251) (Thiomicrospira denitrificans (strain ATCC 33889 / DSM 1251)).